The chain runs to 188 residues: Elongation factor P (188 aa).

The protein belongs to the elongation factor P family.

The protein localises to the cytoplasm. It participates in protein biosynthesis; polypeptide chain elongation. Its function is as follows. Involved in peptide bond synthesis. Stimulates efficient translation and peptide-bond synthesis on native or reconstituted 70S ribosomes in vitro. Probably functions indirectly by altering the affinity of the ribosome for aminoacyl-tRNA, thus increasing their reactivity as acceptors for peptidyl transferase. This chain is Elongation factor P, found in Chlorobium phaeobacteroides (strain DSM 266 / SMG 266 / 2430).